The sequence spans 509 residues: Protein disulfide-isomerase (509 aa).

An N-terminal signal peptide occupies residues M1–A19. One can recognise a Thioredoxin 1 domain in the interval D20–G136. Residues C55 and C58 each act as nucleophile in the active site. A disulfide bridge links C55 with C58. K202 carries the post-translational modification N6-acetyllysine. 2 positions are modified to N6-succinyllysine: K224 and K273. Phosphoserine is present on residues S333 and S359. The Thioredoxin 2 domain occupies E335–Q477. Catalysis depends on nucleophile residues C399 and C402. Residues C399 and C402 are joined by a disulfide bond. Residue S429 is modified to Phosphoserine. The disordered stretch occupies residues E473 to L509. Residues A480 to D501 show a composition bias toward acidic residues. The Prevents secretion from ER signature appears at K506–L509.

This sequence belongs to the protein disulfide isomerase family. As to quaternary structure, heterodimer; heterodimerizes with the protein microsomal triglyceride transfer MTTP. Homodimer. Homodimer. Monomers and homotetramers may also occur. Interacts with P4HA2, forming a heterotetramer consisting of 2 alpha subunits (P4HA2) and 2 beta (P4HB), where P4HB plays the role of a structural subunit; this tetramer catalyzes the formation of 4-hydroxyproline in collagen. Also constitutes the structural subunit of the microsomal triacylglycerol transfer protein MTTP in mammalian cells. Stabilizes both enzymes and retain them in the ER without contributing to the catalytic activity. Binds UBQLN1. Interacts with ERO1B. Interacts with ILDR2. Interacts with ERN1/IRE1A (via N-terminus); the interaction is enhanced by phosphorylation of P4HB by FAM20C in response to endoplasmic reticulum stress and results in attenuation of ERN1 activity. Phosphorylation of Ser-359 by FAM20C is induced by endoplasmic reticulum stress and results in a functional switch from oxidoreductase to molecular chaperone. It also promotes interaction with ERN1.

The protein resides in the endoplasmic reticulum. The protein localises to the endoplasmic reticulum lumen. It is found in the melanosome. Its subcellular location is the cell membrane. It carries out the reaction Catalyzes the rearrangement of -S-S- bonds in proteins.. Its function is as follows. This multifunctional protein catalyzes the formation, breakage and rearrangement of disulfide bonds. At the cell surface, seems to act as a reductase that cleaves disulfide bonds of proteins attached to the cell. May therefore cause structural modifications of exofacial proteins. Inside the cell, seems to form/rearrange disulfide bonds of nascent proteins. At high concentrations and following phosphorylation by FAM20C, functions as a chaperone that inhibits aggregation of misfolded proteins. At low concentrations, facilitates aggregation (anti-chaperone activity). May be involved with other chaperones in the structural modification of the TG precursor in hormone biogenesis. Also acts as a structural subunit of various enzymes such as prolyl 4-hydroxylase and microsomal triacylglycerol transfer protein MTTP. Receptor for LGALS9; the interaction retains P4HB at the cell surface of Th2 T helper cells, increasing disulfide reductase activity at the plasma membrane, altering the plasma membrane redox state and enhancing cell migration. This Cricetulus griseus (Chinese hamster) protein is Protein disulfide-isomerase (P4HB).